Here is a 66-residue protein sequence, read N- to C-terminus: Defensin-like peptide 2/4 (66 aa).

Residues 1 to 22 (MRLAYLLLLLVAVLFQAGGGSA) form the signal peptide. A propeptide spanning residues 23 to 24 (KP) is cleaved from the precursor. Residue M26 is modified to D-methionine; in form DLP-2. 3 disulfide bridges follow: C33–C63, C40–C56, and C48–C64.

In terms of processing, stereoinversion of L-Met-26 (in DLP-4) to D-Met-26 (in DLP-2). As to expression, produced by the crural gland and detected in venom from the spur located on each male hind leg. Is also widely expressed in both male and female tissues, including brain, intestine, kidney, lung, spleen and testis.

It localises to the secreted. In terms of biological role, does not show antimicrobial, myotoxic, hemolytic and cell-promoting activities. This Ornithorhynchus anatinus (Duckbill platypus) protein is Defensin-like peptide 2/4.